A 138-amino-acid polypeptide reads, in one-letter code: uncharacterized protein (138 aa).

The disordered stretch occupies residues 1–73 (MCSAGQLLGG…NHTGEPVGDD (73 aa)). Residues 7-18 (LLGGGGGGGGSG) show a composition bias toward gly residues. Over residues 19 to 29 (GERDEDRDALA) the composition is skewed to basic and acidic residues. Positions 30-43 (ERAAAGTEQESGAS) are enriched in low complexity. Residues 106–126 (VIVIFFWVMLWFLGLPAFGLV) traverse the membrane as a helical segment.

Belongs to the FAM241 family.

The protein resides in the membrane. This is an uncharacterized protein from Bos taurus (Bovine).